A 424-amino-acid polypeptide reads, in one-letter code: Proline--tRNA ligase (424 aa).

This sequence belongs to the class-II aminoacyl-tRNA synthetase family. ProS type 2 subfamily. As to quaternary structure, homodimer.

The protein localises to the cytoplasm. The catalysed reaction is tRNA(Pro) + L-proline + ATP = L-prolyl-tRNA(Pro) + AMP + diphosphate. Its function is as follows. Catalyzes the attachment of proline to tRNA(Pro) in a two-step reaction: proline is first activated by ATP to form Pro-AMP and then transferred to the acceptor end of tRNA(Pro). The sequence is that of Proline--tRNA ligase from Ehrlichia canis (strain Jake).